The sequence spans 941 residues: MTVDYKNTLNLPETSFPMRGDLAKREPDMLKNWYEKNLYQKIRKASKGKKSFILHDGPPYANGNIHIGHAVNKILKDIIIKSKTALGFDSPYIPGWDCHGLPIELKVEGLVGKPNEKISAAEFRQKCREYAAEQVEGQKKDFIRLGVLGDWDNPYLTMNFDTEANIIRTLGKVIENGHLYKGSKPVHWCLDCGSSLAEAEVEYEDKVSPSIYVRFPAESADEIEAKFSAQGRGQGKLSAIIWTTTPWTMPSNRAIAVNADLEYNLVQLGDERVILAAELVESVAKAVGIEHIEILGSVKGDDLELSRFHHPFYDFTVPVILGDHVTTDGGTGLVHTAPDHGLDDFIVGKQYDLPMAGLVSNDGKFISTTEFFAGKGVFEANPLVIEKLQEVGNLLKVEKIKHSYPHCWRHKTPIIFRATPQWFIGMETQGLRQQALGEIKQVRWIPDWGQARIEKMVENRPDWCISRQRTWGVPMTLFVHKETEELHPRTLDLLEEVAKRVERAGIQAWWDLDEKELLGADAETYRKVPDTLDVWFDSGSTYSSVVANRPEFNGQNIDMYLEGSDQHRGWFMSSLMLSTATDSKAPYKQVLTHGFTVDGQGRKMSKSIGNIVTPQEVMDKFGGDILRLWVASTDYTGEMTVSDEILKRAADSYRRIRNTARFLLANLNGFDPKRDLVKPEEMVSLDRWAVACALDAQNEIKDAYDNYQFHTVVQRLMRFCSVEMGSFYLDIIKDRQYTTKADSLARRSCQTALWHIAEALVRWMAPILSFTADEIWQHLPQTESARAEFVFTEEFYQGLFGLGEDEKLDDAYWQQLIKVRSEVNRVLEISRNNKEIGGGLEAEVTVYANDEYRALLAQLGNELRFVLITSKVDIKSLSEKPADLADSELEGIAVSVTRSNAEKCPRCWHYSDEIGVSPEHPTLCARCVENVVGNGEVRHFA.

The 'HIGH' region motif lies at 59-69; it reads PYANGNIHIGH. Glu-562 provides a ligand contact to L-isoleucyl-5'-AMP. The 'KMSKS' region signature appears at 603-607; sequence KMSKS. Lys-606 serves as a coordination point for ATP. Zn(2+) is bound by residues Cys-904, Cys-907, Cys-924, and Cys-927.

It belongs to the class-I aminoacyl-tRNA synthetase family. IleS type 1 subfamily. As to quaternary structure, monomer. It depends on Zn(2+) as a cofactor.

The protein resides in the cytoplasm. It catalyses the reaction tRNA(Ile) + L-isoleucine + ATP = L-isoleucyl-tRNA(Ile) + AMP + diphosphate. Functionally, catalyzes the attachment of isoleucine to tRNA(Ile). As IleRS can inadvertently accommodate and process structurally similar amino acids such as valine, to avoid such errors it has two additional distinct tRNA(Ile)-dependent editing activities. One activity is designated as 'pretransfer' editing and involves the hydrolysis of activated Val-AMP. The other activity is designated 'posttransfer' editing and involves deacylation of mischarged Val-tRNA(Ile). The chain is Isoleucine--tRNA ligase from Haemophilus influenzae (strain PittGG).